Reading from the N-terminus, the 295-residue chain is NADPH-dependent reductive aminase (295 aa).

Positions 1–18 (MSKHIGIFGLGAMGTALA) are cleaved as a signal peptide. An NADP(+)-binding site is contributed by 6–20 (GIFGLGAMGTALAAK).

It belongs to the HIBADH-related family. In terms of assembly, homodimer. NADPH serves as cofactor.

Functionally, NADPH-dependent reductive aminase that catalyzes the reductive coupling of a broad set of carbonyl compounds with a variety of primary and secondary amines. Possesses remarkably high activity for the reductive amination of ketones and amines, often with high stereoselectivity and in some cases with ketone:amine ratios as low as 1:1. The cofactor NADPH, the carbonyl compound and the amine are added to the enzyme in that sequence, followed by the release of product, NADP(+) being released at last. RedAm is also able to act in the reverse, oxidative direction and exhibits activity in the dehydrogenation of amines to yield imines. The highest activity is found for 1-methyl-tetrahydroquinoline and acyclic amines are also found to be transformed. In Aspergillus oryzae (strain ATCC 42149 / RIB 40) (Yellow koji mold), this protein is NADPH-dependent reductive aminase.